The sequence spans 308 residues: MNYGKENVAVYRTYATPLEGVRTIPESSFDGRDNVLFGLDVRVQVEGEEFLPSFSEGDNTKVVATDSMKNFILHHAGEYDGATLEGFLEFVGSGFLDTYSQMSAVEVSADEIRFDELPVPEDDGDGYEASDLVFRVSDNESGYGSISLTRDDGTPVITDQTSGVTGLELVKVEGSSFTGYVQDEYTTLPEREDRTLYISLDIFWSYDDPEDALGEDPERYVPSEQVRDIAHVVFDEVDSNSIQDLIYQIGLRVLERYPQLASVRFEANNRTWLSVRDDLDGDASVLREPPAPTGFQQFSMDRGDLDEQ.

Residues Lys-5 and Thr-65 each act as charge relay system in the active site. Urate-binding residues include Thr-65, Asp-66, Phe-177, Arg-194, Ile-242, Gln-243, and Asn-269. Positions 283–308 (ASVLREPPAPTGFQQFSMDRGDLDEQ) are disordered.

The protein belongs to the uricase family.

It catalyses the reaction urate + O2 + H2O = 5-hydroxyisourate + H2O2. It participates in purine metabolism; urate degradation; (S)-allantoin from urate: step 1/3. In terms of biological role, catalyzes the oxidation of uric acid to 5-hydroxyisourate, which is further processed to form (S)-allantoin. This is Uricase from Haloferax volcanii (strain ATCC 29605 / DSM 3757 / JCM 8879 / NBRC 14742 / NCIMB 2012 / VKM B-1768 / DS2) (Halobacterium volcanii).